The sequence spans 39 residues: MKVRPSVKPMCEHCKVIKRKGRVMVICSANPKHKQRQGK.

This sequence belongs to the bacterial ribosomal protein bL36 family.

In Levilactobacillus brevis (strain ATCC 367 / BCRC 12310 / CIP 105137 / JCM 1170 / LMG 11437 / NCIMB 947 / NCTC 947) (Lactobacillus brevis), this protein is Large ribosomal subunit protein bL36.